The following is a 258-amino-acid chain: 6-carboxyhexanoate--CoA ligase (258 aa).

This sequence belongs to the BioW family. In terms of assembly, homodimer. The cofactor is Mg(2+).

The catalysed reaction is heptanedioate + ATP + CoA = 6-carboxyhexanoyl-CoA + AMP + diphosphate. The protein operates within metabolic intermediate metabolism; pimeloyl-CoA biosynthesis; pimeloyl-CoA from pimelate: step 1/1. Its function is as follows. Catalyzes the transformation of pimelate into pimeloyl-CoA with concomitant hydrolysis of ATP to AMP. In Bacillus spizizenii (strain ATCC 23059 / NRRL B-14472 / W23) (Bacillus subtilis subsp. spizizenii), this protein is 6-carboxyhexanoate--CoA ligase.